Consider the following 511-residue polypeptide: Maturase K (511 aa).

Belongs to the intron maturase 2 family. MatK subfamily.

Its subcellular location is the plastid. It localises to the chloroplast. Usually encoded in the trnK tRNA gene intron. Probably assists in splicing its own and other chloroplast group II introns. The polypeptide is Maturase K (Campsis radicans (Trumpet creeper)).